Consider the following 385-residue polypeptide: Serpin-Z1 (385 aa).

The RCL stretch occupies residues 317-341; sequence GAEAAAATADGDCGCSLDFVEPPKK.

This sequence belongs to the serpin family.

Its function is as follows. Probable serine protease inhibitor. In Arabidopsis thaliana (Mouse-ear cress), this protein is Serpin-Z1.